Here is a 350-residue protein sequence, read N- to C-terminus: Flap endonuclease 1 (350 aa).

The N-domain stretch occupies residues 1–101 (MGVNLRELIP…REVEERLRRK (101 aa)). Positions 30, 83, 155, 157, 176, 178, and 239 each coordinate Mg(2+). An I-domain region spans residues 119-261 (EARKYAMMAA…TALRLVKSLG (143 aa)). Residues 341-349 (RQSRLDMWF) are interaction with PCNA.

This sequence belongs to the XPG/RAD2 endonuclease family. FEN1 subfamily. In terms of assembly, interacts with PCNA. PCNA stimulates the nuclease activity without altering cleavage specificity. Mg(2+) is required as a cofactor.

Functionally, structure-specific nuclease with 5'-flap endonuclease and 5'-3' exonuclease activities involved in DNA replication and repair. During DNA replication, cleaves the 5'-overhanging flap structure that is generated by displacement synthesis when DNA polymerase encounters the 5'-end of a downstream Okazaki fragment. Binds the unpaired 3'-DNA end and kinks the DNA to facilitate 5' cleavage specificity. Cleaves one nucleotide into the double-stranded DNA from the junction in flap DNA, leaving a nick for ligation. Also involved in the base excision repair (BER) pathway. Acts as a genome stabilization factor that prevents flaps from equilibrating into structures that lead to duplications and deletions. Also possesses 5'-3' exonuclease activity on nicked or gapped double-stranded DNA. The protein is Flap endonuclease 1 of Aeropyrum pernix (strain ATCC 700893 / DSM 11879 / JCM 9820 / NBRC 100138 / K1).